The primary structure comprises 383 residues: Trichodiene synthase (383 aa).

This sequence belongs to the trichodiene synthase family.

It catalyses the reaction (2E,6E)-farnesyl diphosphate = trichodiene + diphosphate. The protein operates within sesquiterpene biosynthesis; trichothecene biosynthesis. TS is a member of the terpene cyclase group of enzymes. It catalyzes the isomerization and cyclization of farnesyl pyro-phosphate to form trichodiene, the first cyclic intermediate in the biosynthetic pathway for trichothecenes. It serves to branch trichothecene biosynthesis from the isoprenoid pathway. The chain is Trichodiene synthase (TRI5) from Stachybotrys chartarum (Toxic black mold).